A 226-amino-acid polypeptide reads, in one-letter code: Urease accessory protein UreF (226 aa).

This sequence belongs to the UreF family. UreD, UreF and UreG form a complex that acts as a GTP-hydrolysis-dependent molecular chaperone, activating the urease apoprotein by helping to assemble the nickel containing metallocenter of UreC. The UreE protein probably delivers the nickel.

The protein resides in the cytoplasm. Functionally, required for maturation of urease via the functional incorporation of the urease nickel metallocenter. The protein is Urease accessory protein UreF of Burkholderia ambifaria (strain MC40-6).